The following is a 353-amino-acid chain: Cruciform cutting endonuclease 1, mitochondrial (353 aa).

Mg(2+)-binding residues include aspartate 293 and aspartate 294.

As to quaternary structure, homodimer. It depends on Mg(2+) as a cofactor.

The protein localises to the mitochondrion. It catalyses the reaction Endonucleolytic cleavage at a junction such as a reciprocal single-stranded crossover between two homologous DNA duplexes (Holliday junction).. Functionally, capable of resolving Holliday junctions. Specific for 4-way junctions. Seems to be important for the maintenance of mitochondrial DNA. Cleaves fixed junctions at the point of strand exchange. Cleaves after 5'-CT-3' sequence. The protein is Cruciform cutting endonuclease 1, mitochondrial (CCE1) of Saccharomyces cerevisiae (strain ATCC 204508 / S288c) (Baker's yeast).